Consider the following 337-residue polypeptide: F420-dependent glucose-6-phosphate dehydrogenase 2 (337 aa).

Asp-40 serves as a coordination point for coenzyme F420-(gamma-Glu)n. The active-site Proton donor is His-41. Residues Thr-77 and 108–109 (TG) contribute to the coenzyme F420-(gamma-Glu)n site. Residue Glu-110 is the Proton acceptor of the active site. Coenzyme F420-(gamma-Glu)n is bound by residues Asn-113, 178 to 179 (GG), and 181 to 182 (VV). Residues Thr-196, Lys-199, Lys-260, and Arg-284 each coordinate substrate.

The protein belongs to the F420-dependent glucose-6-phosphate dehydrogenase family. Homodimer.

The catalysed reaction is oxidized coenzyme F420-(gamma-L-Glu)(n) + D-glucose 6-phosphate + H(+) = 6-phospho-D-glucono-1,5-lactone + reduced coenzyme F420-(gamma-L-Glu)(n). Catalyzes the coenzyme F420-dependent oxidation of glucose 6-phosphate (G6P) to 6-phosphogluconolactone. In Rhodococcus jostii (strain RHA1), this protein is F420-dependent glucose-6-phosphate dehydrogenase 2.